We begin with the raw amino-acid sequence, 669 residues long: Sodium-dependent phosphate transporter (669 aa).

At 1–6 (MVTGPD) the chain is on the extracellular side. A helical transmembrane segment spans residues 7–27 (MLWLVITSGIACFFMAFVTGA). Topologically, residues 28–47 (NDIANTFSTSIGSKAISIKK) are cytoplasmic. A helical transmembrane segment spans residues 48-68 (ALIVAFFFEALGASLLGGTVT). Topologically, residues 69–86 (DSIRSKIINFQVFYDTPE) are extracellular. The chain crosses the membrane as a helical span at residues 87–107 (FLMLGMCCALMGATVWLAVAT). A topological domain (cytoplasmic) is located at residue arginine 108. The helical transmembrane segment at 109 to 129 (AGLPVSTTHSIIGALLGFGLA) threads the bilayer. The Extracellular portion of the chain corresponds to 130 to 143 (TGNMKSIKWEKINN). The chain crosses the membrane as a helical span at residues 144-164 (IVISWLAAPILAGTCSAIAFT). The Cytoplasmic portion of the chain corresponds to 165–186 (VLRMLILRKKNSFEIIKKMYWF). The helical transmembrane segment at 187 to 207 (LIFLITLPFSVFLIFHNPIVI) threads the bilayer. Topologically, residues 208-239 (NTQCKMKKDGKVIVSSPCYIEDWSAAHSFYAS) are extracellular. Residues 240–260 (IICILLSSLLTAIGSFVIYII) traverse the membrane as a helical segment. Over 261–502 (YNKRINNYNL…YNNGIRGKIK (242 aa)) the chain is Cytoplasmic. Over residues 311–335 (AHNNTSNGTKQNQVGNGTKSNNNNV) the composition is skewed to polar residues. 2 disordered regions span residues 311 to 364 (AHNN…SVEA) and 392 to 444 (TNMN…KNME). Basic and acidic residues predominate over residues 342–352 (KNVKSQQDDSK). Residues 395–433 (NENNNNSNKNNNSNKNNNSNKNNNSNKNNNSNNGNSNEG) show a composition bias toward low complexity. A helical transmembrane segment spans residues 503-523 (VQWYILLFGGLSMSLGLSIMG). The Extracellular portion of the chain corresponds to 524 to 542 (YRVIKTVGMKLIKITPARG). A helical membrane pass occupies residues 543–563 (FTIELISGLVVLFFSICGIPL). At 564 to 632 (SSTHCAVSSV…TSCVNLRLFR (69 aa)) the chain is on the cytoplasmic side. The helical transmembrane segment at 633 to 653 (TVFLSWILTVVFSATVTAGIY) threads the bilayer. At 654 to 669 (SFAAYSPSYIMKMQTV) the chain is on the extracellular side.

It belongs to the inorganic phosphate transporter (PiT) (TC 2.A.20) family.

The protein localises to the cell membrane. The catalysed reaction is 2 Na(+)(out) + phosphate(out) = 2 Na(+)(in) + phosphate(in). Sodium-phosphate symporter which preferentially transports the monovalent form of phosphate with a stoichiometry of two sodium ions per phosphate ion. The polypeptide is Sodium-dependent phosphate transporter (Plasmodium falciparum).